Reading from the N-terminus, the 440-residue chain is Adenylosuccinate lyase (440 aa).

Residues 4–5, 67–69, and 93–94 contribute to the N(6)-(1,2-dicarboxyethyl)-AMP site; these read RY, KHD, and TS. The active-site Proton donor/acceptor is the histidine 141. Glutamine 212 contacts N(6)-(1,2-dicarboxyethyl)-AMP. The active-site Proton donor/acceptor is serine 262. N(6)-(1,2-dicarboxyethyl)-AMP is bound by residues serine 263, 268–270, asparagine 276, and 307–311; these read KRN and SVERF.

This sequence belongs to the lyase 1 family. Adenylosuccinate lyase subfamily. As to quaternary structure, homotetramer. Residues from neighboring subunits contribute catalytic and substrate-binding residues to each active site.

The enzyme catalyses N(6)-(1,2-dicarboxyethyl)-AMP = fumarate + AMP. It carries out the reaction (2S)-2-[5-amino-1-(5-phospho-beta-D-ribosyl)imidazole-4-carboxamido]succinate = 5-amino-1-(5-phospho-beta-D-ribosyl)imidazole-4-carboxamide + fumarate. It functions in the pathway purine metabolism; AMP biosynthesis via de novo pathway; AMP from IMP: step 2/2. The protein operates within purine metabolism; IMP biosynthesis via de novo pathway; 5-amino-1-(5-phospho-D-ribosyl)imidazole-4-carboxamide from 5-amino-1-(5-phospho-D-ribosyl)imidazole-4-carboxylate: step 2/2. Functionally, catalyzes two reactions in de novo purine nucleotide biosynthesis. Catalyzes the breakdown of 5-aminoimidazole- (N-succinylocarboxamide) ribotide (SAICAR or 2-[5-amino-1-(5-phospho-beta-D-ribosyl)imidazole-4-carboxamido]succinate) to 5-aminoimidazole-4-carboxamide ribotide (AICAR or 5-amino-1-(5-phospho-beta-D-ribosyl)imidazole-4-carboxamide) and fumarate, and of adenylosuccinate (ADS or N(6)-(1,2-dicarboxyethyl)-AMP) to adenosine monophosphate (AMP) and fumarate. The polypeptide is Adenylosuccinate lyase (purB) (Helicobacter pylori (strain ATCC 700392 / 26695) (Campylobacter pylori)).